A 186-amino-acid chain; its full sequence is MKTAHEIRPGNVIMLDGSPWVVQKTETTRSGRNAAIVKLKLKNLLLNSGTETTFKGEDKLEDIILDRLDCTYSYFADPMFVFMDAEYNQYDVEAENLGDAAAYIVDGMEETCQVTFYDGKAISVEMPTTIVREVIYTEPSARGDTSGKVMKPATITGGGTVTVADFVKVGDKIEIDTRTGEFKKRV.

This sequence belongs to the elongation factor P family.

Its subcellular location is the cytoplasm. It functions in the pathway protein biosynthesis; polypeptide chain elongation. Its function is as follows. Involved in peptide bond synthesis. Stimulates efficient translation and peptide-bond synthesis on native or reconstituted 70S ribosomes in vitro. Probably functions indirectly by altering the affinity of the ribosome for aminoacyl-tRNA, thus increasing their reactivity as acceptors for peptidyl transferase. This Shewanella baltica (strain OS223) protein is Elongation factor P.